Reading from the N-terminus, the 371-residue chain is Dual-specificity RNA methyltransferase RlmN (371 aa).

E97 serves as the catalytic Proton acceptor. Positions 103 to 341 (DGDRATLCVS…VTVRTTRGDD (239 aa)) constitute a Radical SAM core domain. C110 and C346 form a disulfide bridge. [4Fe-4S] cluster is bound by residues C117, C121, and C124. S-adenosyl-L-methionine-binding positions include 171 to 172 (GE), S203, 225 to 227 (SLH), and N303. The S-methylcysteine intermediate role is filled by C346.

The protein belongs to the radical SAM superfamily. RlmN family. The cofactor is [4Fe-4S] cluster.

It is found in the cytoplasm. The catalysed reaction is adenosine(2503) in 23S rRNA + 2 reduced [2Fe-2S]-[ferredoxin] + 2 S-adenosyl-L-methionine = 2-methyladenosine(2503) in 23S rRNA + 5'-deoxyadenosine + L-methionine + 2 oxidized [2Fe-2S]-[ferredoxin] + S-adenosyl-L-homocysteine. The enzyme catalyses adenosine(37) in tRNA + 2 reduced [2Fe-2S]-[ferredoxin] + 2 S-adenosyl-L-methionine = 2-methyladenosine(37) in tRNA + 5'-deoxyadenosine + L-methionine + 2 oxidized [2Fe-2S]-[ferredoxin] + S-adenosyl-L-homocysteine. In terms of biological role, specifically methylates position 2 of adenine 2503 in 23S rRNA and position 2 of adenine 37 in tRNAs. m2A2503 modification seems to play a crucial role in the proofreading step occurring at the peptidyl transferase center and thus would serve to optimize ribosomal fidelity. This Marinomonas sp. (strain MWYL1) protein is Dual-specificity RNA methyltransferase RlmN.